Here is a 555-residue protein sequence, read N- to C-terminus: Glutamate--tRNA ligase (555 aa).

The 'HIGH' region motif lies at proline 100–histidine 110.

The protein belongs to the class-I aminoacyl-tRNA synthetase family. Glutamate--tRNA ligase type 2 subfamily.

Its subcellular location is the cytoplasm. The catalysed reaction is tRNA(Glu) + L-glutamate + ATP = L-glutamyl-tRNA(Glu) + AMP + diphosphate. Functionally, catalyzes the attachment of glutamate to tRNA(Glu) in a two-step reaction: glutamate is first activated by ATP to form Glu-AMP and then transferred to the acceptor end of tRNA(Glu). The polypeptide is Glutamate--tRNA ligase (Methanococcus maripaludis (strain C7 / ATCC BAA-1331)).